The primary structure comprises 502 residues: Nucleoside transporter 2 (502 aa).

Residues 1 to 30 (MTTSSDSAMVNHTPSPWYKFGFKSFAEFNT) are Cytoplasmic-facing. The helical transmembrane segment at 31 to 51 (YVTFVFLGMSIMMVASAVTSA) threads the bilayer. The Extracellular portion of the chain corresponds to 52–81 (PDFLTRYYVYATGDPDAVAETPLFWNNANT). Residues 82-102 (FYNAGTYVLQVLTELFSLTPF) traverse the membrane as a helical segment. Residues 103–111 (MRRIPLSVR) are Cytoplasmic-facing. Residues 112–132 (LFVGLGIPFAELLLIIIVPAA) traverse the membrane as a helical segment. Over 133–137 (TIKSQ) the chain is Extracellular. A helical transmembrane segment spans residues 138 to 158 (HGAIAVIMVVACVGGFSKALC). The Cytoplasmic segment spans residues 159-178 (DSCTNALVGPFPTKFMNGAQ). Residues 179–199 (WGLTVIALLMSIIQIILKVSM) traverse the membrane as a helical segment. Over 200–210 (GTSFHDILTMS) the chain is Extracellular. A helical membrane pass occupies residues 211 to 231 (RIYFGICIGIQLFAIFELAIL). Over 232–352 (RFNPFAQKYI…SVFKRVYPML (121 aa)) the chain is Cytoplasmic. The interval 252 to 273 (AQNNESTLEETAPSMNEPAAGD) is disordered. The helical transmembrane segment at 353–373 (VCVFLIYFTSLLTFPGVFFLV) threads the bilayer. Residues 374-380 (STTSGWY) lie on the Extracellular side of the membrane. A helical transmembrane segment spans residues 381-401 (MTVIVTLFNAGDFISRMVLMF). At 402-408 (RPLRPSP) the chain is on the cytoplasmic side. A helical membrane pass occupies residues 409–429 (KVVVAGTLGRLIIIPFLVLCV). The Extracellular portion of the chain corresponds to 430 to 436 (RGIIRGE). Residues 437–457 (ALPYVLITLLGLTNGYFGCMA) form a helical membrane-spanning segment. The Cytoplasmic segment spans residues 458–477 (CIHCPRTTTLRYAGERSLAA). Residues 478 to 498 (MLSGISIMLGLCFGSNLSLAI) form a helical membrane-spanning segment. The Extracellular portion of the chain corresponds to 499 to 502 (TLTH).

Belongs to the SLC29A/ENT transporter (TC 2.A.57) family.

The protein resides in the cell membrane. It carries out the reaction inosine(in) = inosine(out). The enzyme catalyses guanosine(in) = guanosine(out). Its function is as follows. High affinity transporter for inosine and guanosine. In Crithidia fasciculata, this protein is Nucleoside transporter 2.